A 184-amino-acid chain; its full sequence is 3-hydroxydecanoyl-[acyl-carrier-protein] dehydratase (184 aa).

His-77 is an active-site residue.

It belongs to the thioester dehydratase family. FabA subfamily. Homodimer.

It is found in the cytoplasm. The enzyme catalyses a (3R)-hydroxyacyl-[ACP] = a (2E)-enoyl-[ACP] + H2O. The catalysed reaction is (3R)-hydroxydecanoyl-[ACP] = (2E)-decenoyl-[ACP] + H2O. It catalyses the reaction (2E)-decenoyl-[ACP] = (3Z)-decenoyl-[ACP]. It functions in the pathway lipid metabolism; fatty acid biosynthesis. Its function is as follows. Necessary for the introduction of cis unsaturation into fatty acids. Catalyzes the dehydration of (3R)-3-hydroxydecanoyl-ACP to E-(2)-decenoyl-ACP and then its isomerization to Z-(3)-decenoyl-ACP. Can catalyze the dehydratase reaction for beta-hydroxyacyl-ACPs with saturated chain lengths up to 16:0, being most active on intermediate chain length. This Hyphomonas neptunium (strain ATCC 15444) protein is 3-hydroxydecanoyl-[acyl-carrier-protein] dehydratase.